Here is a 128-residue protein sequence, read N- to C-terminus: Sulfurtransferase TusD (128 aa).

The Cysteine persulfide intermediate role is filled by C78.

Belongs to the DsrE/TusD family. In terms of assembly, heterohexamer, formed by a dimer of trimers. The hexameric TusBCD complex contains 2 copies each of TusB, TusC and TusD. The TusBCD complex interacts with TusE.

The protein resides in the cytoplasm. Part of a sulfur-relay system required for 2-thiolation of 5-methylaminomethyl-2-thiouridine (mnm(5)s(2)U) at tRNA wobble positions. Accepts sulfur from TusA and transfers it in turn to TusE. The chain is Sulfurtransferase TusD from Escherichia coli (strain K12 / MC4100 / BW2952).